The primary structure comprises 506 residues: MKEYRVYLERARSRQQDFLYPLIFREYIYGLAYSHNFNRSIFVENGGYDNKYSLLNVKRLITRMYQQNHLIISANDSNKNPFWGYNKNLYSQIISEGFAIVVEIPFFLQLSSSLEEAEIIKSYKNVRSIHSVFPFLEDKFTYLNYVSDIRIPYPIHLEILVQILRYWVKDVPFFHLLRLFLYHFCNWNCFIPTKKSISTFSKSNPRLFLFLYNFYVCEYESIFLFLRNKSYHLRLKSFSVFFERIFFYAKREHLVEVFSKDFSYTLPFFKDPNIHYVRYQGKCILASKNVPFLMNKWKYYFIHLWQCFFDVWSQPRTININQLSEHSFQLLGYFSNVRLNRSVVRSQMLQNTFLIEIVSKKLDIIVPIIPLIRSLAKAKFCNVLGHPISKPVWADSSDFDIIERFLRICRNLSHYYNGSSKKKSLYRIKYILRLSCIKTLACKHKSTVRTFLKRSGSEEFLEEFFTEEEEILSLIFPRDSFTLHRFHRNRIWYLDILFSNDLVNDE.

Belongs to the intron maturase 2 family. MatK subfamily.

It is found in the plastid. Its subcellular location is the chloroplast. In terms of biological role, usually encoded in the trnK tRNA gene intron. Probably assists in splicing its own and other chloroplast group II introns. The polypeptide is Maturase K (Trifolium beckwithii (Beckwith's clover)).